We begin with the raw amino-acid sequence, 250 residues long: Acetylglutamate kinase (250 aa).

Residues 41–42 (GG), R63, and N156 contribute to the substrate site.

This sequence belongs to the acetylglutamate kinase family. ArgB subfamily.

The protein localises to the cytoplasm. The catalysed reaction is N-acetyl-L-glutamate + ATP = N-acetyl-L-glutamyl 5-phosphate + ADP. It functions in the pathway amino-acid biosynthesis; L-arginine biosynthesis; N(2)-acetyl-L-ornithine from L-glutamate: step 2/4. In terms of biological role, catalyzes the ATP-dependent phosphorylation of N-acetyl-L-glutamate. This Listeria monocytogenes serotype 4b (strain F2365) protein is Acetylglutamate kinase.